Consider the following 495-residue polypeptide: MTVLIEAHGIHKQFSGVPVLRGIDFTLLSGQVHALMGGNGAGKSTLMKIIAGVETPDSGELNVEGKPFARLKPGQAHQLGIYLVPQEPMLFPNLTVRENILFRLPRGNDPEKRLADKLQQLQCQLNLDAAASTLEVADQQMVEILRGLMRDAKILILDEPTASLTPGETERLFRQIRALQDLGVGIVFISHKLPEIRQLASHVSVMRDGAVVLSGETTQFDDTALITAMTPVSREQGLSDTQKLWLALPGNRRTQAQDFPVLRVEDLTGEGFIDLSLEIYAGEIVGLAGLVGSGRTEFAETLYGLRPTRGGRIWLENQEIGEDSVLTRLEKGLVYLPEDRQVSGLFLDAPIRWNTVALNEPSLWQQRKREAAVVERYHRALGIKLNHPDQIVRTLSGGNQQKVLLARCLEANPLLLIVDEPTRGVDVSARADIYQLIKSVAAQNVAVLMISSDLDEFPGLADRVLVMHQGMFSGELPRHAVSLDRMMALAFGGQS.

ABC transporter domains follow at residues 5 to 233 and 256 to 494; these read IEAH…TPVS and AQDF…FGGQ. Residue 37–44 participates in ATP binding; sequence GGNGAGKS.

It belongs to the ABC transporter superfamily. AI-2 autoinducer porter (TC 3.A.1.2.8) family. In terms of assembly, the complex is composed of two ATP-binding proteins (LsrA), two transmembrane proteins (LsrC and LsrD) and a solute-binding protein (LsrB).

It is found in the cell inner membrane. The enzyme catalyses ATP + H2O + (2R,4S)-2-methyl-2,3,3,4-tetrahydroxytetrahydrofuran-[AI-2-binding protein]Side 1 = ADP + phosphate + (2R,4S)-2-methyl-2,3,3,4-tetrahydroxytetrahydrofuranSide 2 + [AI-2-binding protein]Side 1.. Its function is as follows. Part of the ABC transporter complex LsrABCD involved in autoinducer 2 (AI-2) import. Responsible for energy coupling to the transport system. The polypeptide is Autoinducer 2 import ATP-binding protein LsrA (lsrA) (Enterobacter sp. (strain 638)).